The primary structure comprises 421 residues: Imidazolonepropionase (421 aa).

Positions 81 and 83 each coordinate Fe(3+). H81 and H83 together coordinate Zn(2+). The 4-imidazolone-5-propanoate site is built by R90, Y153, and H186. Y153 is a binding site for N-formimidoyl-L-glutamate. H251 lines the Fe(3+) pocket. H251 lines the Zn(2+) pocket. Position 254 (E254) interacts with 4-imidazolone-5-propanoate. A Fe(3+)-binding site is contributed by D326. D326 is a binding site for Zn(2+). Residues N328 and G330 each contribute to the N-formimidoyl-L-glutamate site. S331 lines the 4-imidazolone-5-propanoate pocket.

This sequence belongs to the metallo-dependent hydrolases superfamily. HutI family. It depends on Zn(2+) as a cofactor. Fe(3+) is required as a cofactor.

It localises to the cytoplasm. The catalysed reaction is 4-imidazolone-5-propanoate + H2O = N-formimidoyl-L-glutamate. Its pathway is amino-acid degradation; L-histidine degradation into L-glutamate; N-formimidoyl-L-glutamate from L-histidine: step 3/3. Catalyzes the hydrolytic cleavage of the carbon-nitrogen bond in imidazolone-5-propanoate to yield N-formimidoyl-L-glutamate. It is the third step in the universal histidine degradation pathway. The chain is Imidazolonepropionase from Streptococcus pyogenes serotype M2 (strain MGAS10270).